Here is a 154-residue protein sequence, read N- to C-terminus: Ubiquitin-conjugating enzyme E2 L3 (154 aa).

In terms of domain architecture, UBC core spans 2–149 (AASRRLMKEL…AEEFTKKYGE (148 aa)). The Glycyl thioester intermediate role is filled by C86. Position 131 is an N6-acetyllysine (K131).

This sequence belongs to the ubiquitin-conjugating enzyme family. Interacts with PRKN; involved in ubiquitination and degradation of misfolded proteins. Interacts with UBE3A. Interacts with CCNB1IP1, CBL, ZAP70, RNF19A, RNF19B and RNF144B. Interacts with ARIH1. Interacts with ARIH2 (via RING-type 1). Interacts with NCOA1; they functionally interact to regulate progesterone receptor transcriptional activity. Interacts with NDFIP1 (via N-terminus); the interaction mediates recruitment of UBE2L3 to ITCH and causes MAP3K7 ubiquitination. Post-translationally, ubiquitinated. The alteration of UBE2L3 protein levels during the S-phase of the cell cycle is due to ubiquitin-dependent proteasomal degradation. Autoubiquitinated in vitro.

The protein localises to the nucleus. The protein resides in the cytoplasm. It carries out the reaction S-ubiquitinyl-[E1 ubiquitin-activating enzyme]-L-cysteine + [E2 ubiquitin-conjugating enzyme]-L-cysteine = [E1 ubiquitin-activating enzyme]-L-cysteine + S-ubiquitinyl-[E2 ubiquitin-conjugating enzyme]-L-cysteine.. The protein operates within protein modification; protein ubiquitination. In terms of biological role, ubiquitin-conjugating enzyme E2 that specifically acts with HECT-type and RBR family E3 ubiquitin-protein ligases. Does not function with most RING-containing E3 ubiquitin-protein ligases because it lacks intrinsic E3-independent reactivity with lysine: in contrast, it has activity with the RBR family E3 enzymes, such as PRKN, RNF31 and ARIH1, that function like RING-HECT hybrids. Accepts ubiquitin from the E1 complex and catalyzes its covalent attachment to other proteins. Mediates ubiquitination by the CUL9-RBX1 complex. In vitro catalyzes 'Lys-11'-linked polyubiquitination. Involved in the selective degradation of short-lived and abnormal proteins. Down-regulated during the S-phase it is involved in progression through the cell cycle. Regulates nuclear hormone receptors transcriptional activity. May play a role in myelopoiesis. The sequence is that of Ubiquitin-conjugating enzyme E2 L3 (UBE2L3) from Pongo abelii (Sumatran orangutan).